A 239-amino-acid polypeptide reads, in one-letter code: tRNA1(Val) (adenine(37)-N6)-methyltransferase (239 aa).

The protein belongs to the methyltransferase superfamily. tRNA (adenine-N(6)-)-methyltransferase family.

The protein localises to the cytoplasm. The catalysed reaction is adenosine(37) in tRNA1(Val) + S-adenosyl-L-methionine = N(6)-methyladenosine(37) in tRNA1(Val) + S-adenosyl-L-homocysteine + H(+). Specifically methylates the adenine in position 37 of tRNA(1)(Val) (anticodon cmo5UAC). The protein is tRNA1(Val) (adenine(37)-N6)-methyltransferase of Vibrio campbellii (strain ATCC BAA-1116).